The primary structure comprises 337 residues: Glyceraldehyde-3-phosphate dehydrogenase (337 aa).

Residues 12–13, aspartate 34, and arginine 79 contribute to the NAD(+) site; that span reads RI. D-glyceraldehyde 3-phosphate is bound by residues 150–152, threonine 181, 210–211, and arginine 233; these read SCT and TG. The active-site Nucleophile is cysteine 151. Asparagine 315 contacts NAD(+).

Belongs to the glyceraldehyde-3-phosphate dehydrogenase family. In terms of assembly, homotetramer.

It is found in the cytoplasm. It catalyses the reaction D-glyceraldehyde 3-phosphate + phosphate + NAD(+) = (2R)-3-phospho-glyceroyl phosphate + NADH + H(+). It functions in the pathway carbohydrate degradation; glycolysis; pyruvate from D-glyceraldehyde 3-phosphate: step 1/5. This Coccidioides immitis (strain RS) (Valley fever fungus) protein is Glyceraldehyde-3-phosphate dehydrogenase (GPD).